Here is a 355-residue protein sequence, read N- to C-terminus: Protein-glutamate methylesterase/protein-glutamine glutaminase 3 (355 aa).

Residues 8 to 126 (RVLVVDDSPT…AEELRRWGKE (119 aa)) enclose the Response regulatory domain. Aspartate 59 carries the post-translational modification 4-aspartylphosphate. The CheB-type methylesterase domain occupies 152-337 (PPTGARVDIF…LASMPELILQ (186 aa)). Active-site residues include serine 166, histidine 193, and aspartate 284.

The protein belongs to the CheB family. In terms of processing, phosphorylated by CheA. Phosphorylation of the N-terminal regulatory domain activates the methylesterase activity.

The protein resides in the cytoplasm. It carries out the reaction [protein]-L-glutamate 5-O-methyl ester + H2O = L-glutamyl-[protein] + methanol + H(+). The enzyme catalyses L-glutaminyl-[protein] + H2O = L-glutamyl-[protein] + NH4(+). Involved in chemotaxis. Part of a chemotaxis signal transduction system that modulates chemotaxis in response to various stimuli. Catalyzes the demethylation of specific methylglutamate residues introduced into the chemoreceptors (methyl-accepting chemotaxis proteins or MCP) by CheR. Also mediates the irreversible deamidation of specific glutamine residues to glutamic acid. This chain is Protein-glutamate methylesterase/protein-glutamine glutaminase 3, found in Myxococcus xanthus (strain DK1622).